Reading from the N-terminus, the 136-residue chain is Large ribosomal subunit protein uL16 (136 aa).

This sequence belongs to the universal ribosomal protein uL16 family. Part of the 50S ribosomal subunit.

Its function is as follows. Binds 23S rRNA and is also seen to make contacts with the A and possibly P site tRNAs. In Rickettsia peacockii (strain Rustic), this protein is Large ribosomal subunit protein uL16.